A 472-amino-acid polypeptide reads, in one-letter code: Adenosylhomocysteinase (472 aa).

3 residues coordinate substrate: threonine 63, aspartate 138, and glutamate 198. Position 199 to 201 (199 to 201 (TTT)) interacts with NAD(+). Residues lysine 228 and aspartate 232 each coordinate substrate. NAD(+)-binding positions include asparagine 233, 262–267 (GYGDVG), glutamate 285, asparagine 320, 341–343 (IGH), and asparagine 386.

Belongs to the adenosylhomocysteinase family. Requires NAD(+) as cofactor.

The protein localises to the cytoplasm. It catalyses the reaction S-adenosyl-L-homocysteine + H2O = L-homocysteine + adenosine. It participates in amino-acid biosynthesis; L-homocysteine biosynthesis; L-homocysteine from S-adenosyl-L-homocysteine: step 1/1. Functionally, may play a key role in the regulation of the intracellular concentration of adenosylhomocysteine. This chain is Adenosylhomocysteinase, found in Methylococcus capsulatus (strain ATCC 33009 / NCIMB 11132 / Bath).